Here is a 318-residue protein sequence, read N- to C-terminus: NAC domain-containing protein 68 (318 aa).

The NAC domain maps to 21–175 (LPPGFRFHPT…EWVLCRLYNK (155 aa)).

In terms of tissue distribution, expressed in stems, leaf blades and callus. Weakly expressed in developing flowers.

It localises to the nucleus. Functionally, probable transcription factor involved in stress response. This is NAC domain-containing protein 68 from Oryza sativa subsp. japonica (Rice).